The chain runs to 170 residues: Protein SprT (170 aa).

In terms of domain architecture, SprT-like spans 22 to 163 (LQQANLTLQT…RCRRCGKTLR (142 aa)). Residue His-78 participates in Zn(2+) binding. Glu-79 is an active-site residue. His-82 contributes to the Zn(2+) binding site.

This sequence belongs to the SprT family. Zn(2+) is required as a cofactor.

Its subcellular location is the cytoplasm. The chain is Protein SprT from Pectobacterium atrosepticum (strain SCRI 1043 / ATCC BAA-672) (Erwinia carotovora subsp. atroseptica).